The sequence spans 268 residues: HLA class II histocompatibility antigen, DQ beta 2 chain (268 aa).

A signal peptide spans 1-32; sequence MSWKMALQIPGGFWAAAVTVMLVMLSTPVAEA. The beta-1 stretch occupies residues 33–126; the sequence is RDFPKDFLVQ…ELRTTLQRQV (94 aa). Residues 33–229 are Extracellular-facing; sequence RDFPKDFLVQ…RAQSESAQSK (197 aa). Cystine bridges form between Cys-47/Cys-110 and Cys-148/Cys-204. N-linked (GlcNAc...) asparagine glycosylation is present at Asn-51. The beta-2 stretch occupies residues 127-229; the sequence is EPTVTISPSR…RAQSESAQSK (103 aa). The 89-residue stretch at 128 to 216 folds into the Ig-like C1-type domain; that stretch reads PTVTISPSRT…EHPSLQSPIT (89 aa). The chain crosses the membrane as a helical span at residues 230-250; the sequence is MLSGIGGFVLGLIFLGLGLII. Topologically, residues 251 to 268 are cytoplasmic; sequence RHRGQKGPRGPPPAGLLH.

This sequence belongs to the MHC class II family. As to quaternary structure, heterodimer of an alpha and a beta subunit; also referred as MHC class II molecule. Dimer formation with HLA-DQA2, but not with HLA-DQA1, is required for efficient exit from the endoplasmic reticulum (ER). In the ER, forms a heterononamer; 3 MHC class II molecules bind to a CD74 homotrimer (also known as invariant chain or HLA class II histocompatibility antigen gamma chain). In the endosomal/lysosomal system; CD74 undergoes sequential degradation by various proteases; leaving a small fragment termed CLIP on each MHC class II molecule. MHC class II molecule interacts with HLA_DM, and HLA_DO in B-cells, in order to release CLIP and facilitate the binding of antigenic peptides. Association with HLA-DMA also occurs in skin Langerhans cells, in post-Golgi compartments. Restricted to skin Langerhans cells (at protein level).

It localises to the cell membrane. The protein resides in the endoplasmic reticulum membrane. Its subcellular location is the golgi apparatus. The protein localises to the trans-Golgi network membrane. It is found in the endosome membrane. It localises to the lysosome membrane. Binds peptides derived from antigens that access the endocytic route of antigen presenting cells (APC) and presents them on the cell surface for recognition by the CD4 T-cells. The peptide binding cleft accommodates peptides of 10-30 residues. The peptides presented by MHC class II molecules are generated mostly by degradation of proteins that access the endocytic route, where they are processed by lysosomal proteases and other hydrolases. Exogenous antigens that have been endocytosed by the APC are thus readily available for presentation via MHC II molecules, and for this reason this antigen presentation pathway is usually referred to as exogenous. As membrane proteins on their way to degradation in lysosomes as part of their normal turn-over are also contained in the endosomal/lysosomal compartments, exogenous antigens must compete with those derived from endogenous components. Autophagy is also a source of endogenous peptides, autophagosomes constitutively fuse with MHC class II loading compartments. In addition to APCs, other cells of the gastrointestinal tract, such as epithelial cells, express MHC class II molecules and CD74 and act as APCs, which is an unusual trait of the GI tract. To produce a MHC class II molecule that presents an antigen, three MHC class II molecules (heterodimers of an alpha and a beta chain) associate with a CD74 trimer in the ER to form a heterononamer. Soon after the entry of this complex into the endosomal/lysosomal system where antigen processing occurs, CD74 undergoes a sequential degradation by various proteases, including CTSS and CTSL, leaving a small fragment termed CLIP (class-II-associated invariant chain peptide). The removal of CLIP is facilitated by HLA-DM via direct binding to the alpha-beta-CLIP complex so that CLIP is released. HLA-DM stabilizes MHC class II molecules until primary high affinity antigenic peptides are bound. The MHC II molecule bound to a peptide is then transported to the cell membrane surface. In B-cells, the interaction between HLA-DM and MHC class II molecules is regulated by HLA-DO. Primary dendritic cells (DCs) also to express HLA-DO. Lysosomal microenvironment has been implicated in the regulation of antigen loading into MHC II molecules, increased acidification produces increased proteolysis and efficient peptide loading. The sequence is that of HLA class II histocompatibility antigen, DQ beta 2 chain (HLA-DQB2) from Homo sapiens (Human).